The chain runs to 164 residues: Pleckstrin homology domain-containing family J member 1 (164 aa).

The PH domain occupies 15-108 (PAEMAAELGM…WMEALQRASY (94 aa)).

This Mus musculus (Mouse) protein is Pleckstrin homology domain-containing family J member 1 (Plekhj1).